A 704-amino-acid chain; its full sequence is Pentatricopeptide repeat-containing protein At4g28010 (704 aa).

PPR repeat units follow at residues 71 to 105 (LAFA…DTFI), 106 to 140 (NFVS…GFAF), 141 to 175 (NVYN…SLMP), 176 to 210 (DVFS…GCSW), 211 to 245 (SLVT…GLEA), 246 to 280 (DLVV…GDSP), 281 to 315 (CAIT…GVRP), 316 to 350 (NVYT…DEEP), 351 to 385 (NAVT…RTRP), 386 to 416 (DNIT…MLKD), 423 to 453 (DVIS…LVEK), 458 to 492 (DRVT…KIVR), 493 to 527 (NSDT…ELQP), 528 to 562 (SVFD…NNFP), 563 to 597 (DVVS…GLSP), 598 to 632 (DLFT…GFEP), and 633 to 667 (DAHI…DIVL).

Belongs to the PPR family. P subfamily.

This is Pentatricopeptide repeat-containing protein At4g28010 from Arabidopsis thaliana (Mouse-ear cress).